The primary structure comprises 457 residues: Argininosuccinate lyase (457 aa).

It belongs to the lyase 1 family. Argininosuccinate lyase subfamily.

It localises to the cytoplasm. It catalyses the reaction 2-(N(omega)-L-arginino)succinate = fumarate + L-arginine. It functions in the pathway amino-acid biosynthesis; L-arginine biosynthesis; L-arginine from L-ornithine and carbamoyl phosphate: step 3/3. The sequence is that of Argininosuccinate lyase from Aquifex aeolicus (strain VF5).